Here is a 315-residue protein sequence, read N- to C-terminus: L-lactate dehydrogenase (315 aa).

Positions 12, 33, and 65 each coordinate NAD(+). Residues Q82, R88, and 120 to 123 (NPVD) each bind substrate. NAD(+) contacts are provided by residues 118–120 (ISN) and S143. 148-151 (DTSR) provides a ligand contact to substrate. The beta-D-fructose 1,6-bisphosphate site is built by R153 and H168. H175 serves as the catalytic Proton acceptor. A Phosphotyrosine modification is found at Y219. Substrate is bound at residue T228.

It belongs to the LDH/MDH superfamily. LDH family. In terms of assembly, homotetramer.

Its subcellular location is the cytoplasm. The enzyme catalyses (S)-lactate + NAD(+) = pyruvate + NADH + H(+). Its pathway is fermentation; pyruvate fermentation to lactate; (S)-lactate from pyruvate: step 1/1. With respect to regulation, allosterically activated by fructose 1,6-bisphosphate (FBP). Functionally, catalyzes the conversion of lactate to pyruvate. This is L-lactate dehydrogenase from Mycoplasmopsis pulmonis (strain UAB CTIP) (Mycoplasma pulmonis).